A 660-amino-acid polypeptide reads, in one-letter code: T-box protein H15 (660 aa).

Residues 1 to 11 (MLLSNQPANTK) show a composition bias toward polar residues. Disordered regions lie at residues 1–72 (MLLS…NHNQ), 90–122 (GGNAPSSREPSERSLSPASVERYSGQDADDDVD), and 169–266 (QQQQ…PKIV). The segment covering 12 to 22 (PQQTPSPSQTQ) has biased composition (low complexity). Positions 23–33 (NFKSKLQQQIV) are enriched in polar residues. Positions 35-47 (AAAAAAANIANGS) are enriched in low complexity. Residues 48 to 71 (SHHHHHQNHHHHHPLNNHHNHNHN) show a composition bias toward basic residues. 2 stretches are compositionally biased toward low complexity: residues 93 to 108 (APSSREPSERSLSPAS) and 169 to 179 (QQQQQQQQQRQ). Positions 180–198 (QTHHHATTGKQQRQHHNHH) are enriched in basic residues. Low complexity predominate over residues 199-233 (SSNTNNSSNSGNSNTNSKSSSQRGRSAAAVGAAAT). A compositionally biased stretch (pro residues) spans 234 to 243 (PSPPPPPPSQ). The segment at residues 286-472 (LWDKFHELGT…SNPFAKGFRD (187 aa)) is a DNA-binding region (T-box). The disordered stretch occupies residues 598–660 (NRTPPPSMAV…PPASNRAESP (63 aa)). Positions 600–613 (TPPPSMAVAPPAPA) are enriched in pro residues. Positions 614–624 (TPTSSCGSASP) are enriched in low complexity. Polar residues predominate over residues 643–660 (QVPQHQASPPASNRAESP).

The protein resides in the nucleus. This Drosophila melanogaster (Fruit fly) protein is T-box protein H15 (H15).